Reading from the N-terminus, the 495-residue chain is Ectonucleoside triphosphate diphosphohydrolase 2 (495 aa).

At 2-4 (ARR) the chain is on the cytoplasmic side. Residues 5-25 (AAAVLLLLALGCLLGILLLCL) traverse the membrane as a helical segment. Residues 26–465 (GSGDARGPPS…SHRSMLYNYW (440 aa)) lie on the Extracellular side of the membrane. N62 carries an N-linked (GlcNAc...) asparagine glycan. A disulfide bridge links C73 with C97. The active-site Proton acceptor is the E162. An ATP-binding site is contributed by 201–205 (GASTQ). 4 cysteine pairs are disulfide-bonded: C239–C286, C267–C311, C324–C329, and C378–C400. A glycan (N-linked (GlcNAc...) asparagine) is linked at N297. N-linked (GlcNAc...) asparagine glycosylation is found at N418 and N444. The chain crosses the membrane as a helical span at residues 466–486 (VILILLFVITTLTALLTAVYL). Over 487 to 495 (LRRSKSSTI) the chain is Cytoplasmic.

It belongs to the GDA1/CD39 NTPase family. It depends on Ca(2+) as a cofactor. Mg(2+) serves as cofactor.

The protein resides in the membrane. Its function is as follows. In the nervous system, could hydrolyze ATP and other nucleotides to regulate purinergic neurotransmission. Hydrolyzes ADP only to a marginal extent. In Gallus gallus (Chicken), this protein is Ectonucleoside triphosphate diphosphohydrolase 2 (ENTPD2).